The following is a 242-amino-acid chain: NAD-dependent protein deacetylase (242 aa).

In terms of domain architecture, Deacetylase sirtuin-type spans 1–242 (MQQFEEVRTI…EFVEGLSSIK (242 aa)). Positions 23, 27, 34, 35, 102, 104, 105, and 120 each coordinate NAD(+). Position 34 (Phe-34) interacts with nicotinamide. Residues Ile-104 and Asp-105 each contribute to the nicotinamide site. His-120 functions as the Proton acceptor in the catalytic mechanism. Positions 128, 131, 148, and 151 each coordinate Zn(2+). NAD(+) contacts are provided by Thr-187, Ser-188, Asn-213, and Ile-231.

Belongs to the sirtuin family. Class U subfamily. It depends on Zn(2+) as a cofactor.

The protein localises to the cytoplasm. The enzyme catalyses N(6)-acetyl-L-lysyl-[protein] + NAD(+) + H2O = 2''-O-acetyl-ADP-D-ribose + nicotinamide + L-lysyl-[protein]. Functionally, NAD-dependent protein deacetylase which modulates the activities of several enzymes which are inactive in their acetylated form. In Bacillus anthracis, this protein is NAD-dependent protein deacetylase.